Reading from the N-terminus, the 2500-residue chain is Non-reducing polyketide synthase atr1 (2500 aa).

An N-terminal acylcarrier protein transacylase domain (SAT) region spans residues 13–260 (VFSPQSKAPK…HNPENANLAL (248 aa)). One can recognise a Ketosynthase family 3 (KS3) domain in the interval 385-808 (TDAVAVVGMA…GSNSAVLLCQ (424 aa)). Residues C557, H692, and H731 each act as for beta-ketoacyl synthase activity in the active site. The segment at 908 to 1199 (MTFSGQSRQS…EFPERHTFLD (292 aa)) is malonyl-CoA:ACP transacylase (MAT) domain. Residue S995 is the For acyl/malonyl transferase activity of the active site. Residues 1286-1413 (PRLVEPRTKP…GDFGFTTQTQ (128 aa)) are N-terminal hotdog fold. A PKS/mFAS DH domain is found at 1286–1584 (PRLVEPRTKP…FTKLPITRLE (299 aa)). The tract at residues 1287-1583 (RLVEPRTKPS…QFTKLPITRL (297 aa)) is product template (PT) domain. Residue H1317 is the Proton acceptor; for dehydratase activity of the active site. The C-terminal hotdog fold stretch occupies residues 1433 to 1584 (SETLKSKRAY…FTKLPITRLE (152 aa)). The active-site Proton donor; for dehydratase activity is D1495. Positions 1594–1649 (AHNTPILKSSQQDSIVSASSSSSTEHSDDDSEDDGSRSPSHSDTSVDSESEAPADN) are disordered. A compositionally biased stretch (low complexity) spans 1602 to 1617 (SSQQDSIVSASSSSST). Residues 1649–1725 (NGAAKKLKSL…RIVAPEMAAK (77 aa)) form the Carrier domain. S1683 carries the O-(pantetheine 4'-phosphoryl)serine modification. Residues 2164 to 2496 (KSYRIETMPY…YEFIFDVVGR (333 aa)) form a thioesterase (TE) domain region. Active-site for thioesterase activity residues include S2285 and D2434.

It catalyses the reaction 6 malonyl-CoA + 2 acetyl-CoA + 2 S-adenosyl-L-methionine + 3 H(+) = 4-O-demethylbarbatate + 2 S-adenosyl-L-homocysteine + 6 CO2 + 8 CoA + H2O. Its pathway is secondary metabolite biosynthesis; terpenoid biosynthesis. Its function is as follows. Non-reducing polyketide synthase; part of the gene cluster that mediates the biosynthesis of atranorin, a depside of polyketide origin that accumulates in the cortical or medullary layers of lichen thalli. The first step in the pathway is performed by the non-reducing polyketide synthase atr1 that produces 4-O-demethylbarbatic acid composed of two 3-methylorsellinic acid (3MOA) moieties from S-adenosyl-L-methionine (SAM), acetyl-CoA and malonyl-CoA units. The pathway continues with the actions of the cytochrome P450 monooygenase atr2 that catalizes the oxidation of c-9 and the O-methyltransferase atr3 that performs the methylation of the carboxyl group to yield atranorin, via the proatranorin II and III intermediates if atr2 acts first, or the proatranorin I intermediate if atr3 acts first. The sequence is that of Non-reducing polyketide synthase atr1 from Stereocaulon alpinum (Alpine snow lichen).